We begin with the raw amino-acid sequence, 436 residues long: Histidinol dehydrogenase (436 aa).

3 residues coordinate substrate: S242, Q264, and H267. Residues Q264 and H267 each contribute to the Zn(2+) site. Residues E332 and H333 each act as proton acceptor in the active site. The substrate site is built by H333, D366, E420, and H425. D366 lines the Zn(2+) pocket. H425 provides a ligand contact to Zn(2+).

This sequence belongs to the histidinol dehydrogenase family. Zn(2+) serves as cofactor.

It carries out the reaction L-histidinol + 2 NAD(+) + H2O = L-histidine + 2 NADH + 3 H(+). The protein operates within amino-acid biosynthesis; L-histidine biosynthesis; L-histidine from 5-phospho-alpha-D-ribose 1-diphosphate: step 9/9. Functionally, catalyzes the sequential NAD-dependent oxidations of L-histidinol to L-histidinaldehyde and then to L-histidine. This Nitratidesulfovibrio vulgaris (strain ATCC 29579 / DSM 644 / CCUG 34227 / NCIMB 8303 / VKM B-1760 / Hildenborough) (Desulfovibrio vulgaris) protein is Histidinol dehydrogenase.